The primary structure comprises 243 residues: GIEKIISRSMFDQMLKHRNNPACPAKGFYTYDAFLAAAKSFPSFGTTGSTDVRKRELAAFLGQTSHETTGGWPSAPDGPYAWGYCFLKERNPSSNYCAPSPRYPCAPGKSYYGRGPLQLSWNYNYGPCGEALRVNLLGNPDLVATDRVLSFKTALWFWMTPQAPKPSCHDVLTGRWQPSAADTAAGRLPGYGVLTNLLNGGLECGKGPNPQVADRLGFFRRYCGLLGVGTGNNLDCYNQRPFG.

3 disulfide bridges follow: C23-C85, C97-C105, and C223-C236. Residue E67 is the Proton donor of the active site.

Its subcellular location is the vacuole. It carries out the reaction Random endo-hydrolysis of N-acetyl-beta-D-glucosaminide (1-&gt;4)-beta-linkages in chitin and chitodextrins.. In terms of biological role, defense against chitin-containing fungal pathogens. Shows activity on chitin, tetra-N-acetylglucosamine and chitosan. The protein is Endochitinase of Carica papaya (Papaya).